A 218-amino-acid chain; its full sequence is Transaldolase (218 aa).

Residue lysine 83 is the Schiff-base intermediate with substrate of the active site.

It belongs to the transaldolase family. Type 3B subfamily.

Its subcellular location is the cytoplasm. It catalyses the reaction D-sedoheptulose 7-phosphate + D-glyceraldehyde 3-phosphate = D-erythrose 4-phosphate + beta-D-fructose 6-phosphate. It participates in carbohydrate degradation; pentose phosphate pathway; D-glyceraldehyde 3-phosphate and beta-D-fructose 6-phosphate from D-ribose 5-phosphate and D-xylulose 5-phosphate (non-oxidative stage): step 2/3. In terms of biological role, transaldolase is important for the balance of metabolites in the pentose-phosphate pathway. Does not show fructose-6-P aldolase activity. The chain is Transaldolase (tal) from Thermotoga maritima (strain ATCC 43589 / DSM 3109 / JCM 10099 / NBRC 100826 / MSB8).